We begin with the raw amino-acid sequence, 464 residues long: NADH-ubiquinone oxidoreductase chain 4 (464 aa).

The next 13 helical transmembrane spans lie at Leu-18–Thr-38, Ile-54–Trp-74, Ser-79–Cys-99, Met-102–Leu-122, Ala-131–Gly-151, Val-168–Val-188, Pro-207–Ile-227, Val-239–Ile-259, Leu-266–Leu-286, Leu-297–Ile-317, Gly-332–Ile-352, Thr-375–Val-395, and Leu-420–Ile-440.

Belongs to the complex I subunit 4 family.

The protein localises to the mitochondrion membrane. The enzyme catalyses a ubiquinone + NADH + 5 H(+)(in) = a ubiquinol + NAD(+) + 4 H(+)(out). Core subunit of the mitochondrial membrane respiratory chain NADH dehydrogenase (Complex I) that is believed to belong to the minimal assembly required for catalysis. Complex I functions in the transfer of electrons from NADH to the respiratory chain. The immediate electron acceptor for the enzyme is believed to be ubiquinone. In Candida albicans (strain SC5314 / ATCC MYA-2876) (Yeast), this protein is NADH-ubiquinone oxidoreductase chain 4 (NAD4).